The chain runs to 268 residues: Eukaryotic translation initiation factor 3 subunit J (268 aa).

Disordered regions lie at residues 1-27 (MSWDDEEFEVRTSTKDQPMVVSWDDEF), 40-63 (DAEEVPKQKQKPKAAPKAAKKVDK), and 217-249 (LAKVKGGTATGGAGKKKAKAARPNLGGAFKKDQ). The segment covering 47 to 58 (QKQKPKAAPKAA) has biased composition (basic residues). A coiled-coil region spans residues 191 to 221 (IESIRQTVATLNVLIKEKERQERQARLAKVK).

It belongs to the eIF-3 subunit J family. In terms of assembly, component of the eukaryotic translation initiation factor 3 (eIF-3) complex.

The protein localises to the cytoplasm. Functionally, component of the eukaryotic translation initiation factor 3 (eIF-3) complex, which is involved in protein synthesis of a specialized repertoire of mRNAs and, together with other initiation factors, stimulates binding of mRNA and methionyl-tRNAi to the 40S ribosome. The eIF-3 complex specifically targets and initiates translation of a subset of mRNAs involved in cell proliferation. The chain is Eukaryotic translation initiation factor 3 subunit J from Eremothecium gossypii (strain ATCC 10895 / CBS 109.51 / FGSC 9923 / NRRL Y-1056) (Yeast).